Consider the following 100-residue polypeptide: MATIADSRDIILAPVISEKSYGLLDDNVYTFVVHPDSNKTQIKIAIEKIFSVKVASVNTSNRKGKCKRTRTGFGRRKNTKRAIVTLAPGSKSIDLFGTPA.

It belongs to the universal ribosomal protein uL23 family. In terms of assembly, part of the 50S ribosomal subunit. Contacts protein L29, and trigger factor when it is bound to the ribosome.

In terms of biological role, one of the early assembly proteins it binds 23S rRNA. One of the proteins that surrounds the polypeptide exit tunnel on the outside of the ribosome. Forms the main docking site for trigger factor binding to the ribosome. This Mycobacterium leprae (strain Br4923) protein is Large ribosomal subunit protein uL23.